The following is a 940-amino-acid chain: Vacuolar protein sorting-associated protein 54 (940 aa).

The residue at position 30 (Thr-30) is a Phosphothreonine. Residues Gln-192–Thr-218 form a disordered region. Residues His-299–His-325 adopt a coiled-coil conformation.

It belongs to the VPS54 family.

The protein localises to the golgi apparatus. It is found in the trans-Golgi network. In terms of biological role, may be involved in retrograde transport from early and late endosomes to late Golgi. Required during spermatogenesis for sperm individualization. The chain is Vacuolar protein sorting-associated protein 54 (scat) from Drosophila melanogaster (Fruit fly).